The sequence spans 311 residues: Porphobilinogen deaminase (311 aa).

S-(dipyrrolylmethanemethyl)cysteine is present on Cys-243.

Belongs to the HMBS family. Monomer. Dipyrromethane serves as cofactor.

It carries out the reaction 4 porphobilinogen + H2O = hydroxymethylbilane + 4 NH4(+). It functions in the pathway porphyrin-containing compound metabolism; protoporphyrin-IX biosynthesis; coproporphyrinogen-III from 5-aminolevulinate: step 2/4. In terms of biological role, tetrapolymerization of the monopyrrole PBG into the hydroxymethylbilane pre-uroporphyrinogen in several discrete steps. The protein is Porphobilinogen deaminase of Blochmanniella floridana.